Reading from the N-terminus, the 261-residue chain is uncharacterized protein (261 aa).

Residues 1 to 22 (MGVADNEYISVPTGEPVQQQPQ) form a disordered region. 3 helical membrane-spanning segments follow: residues 92–112 (IIIL…ILGL), 122–142 (IVVM…IFLF), and 147–167 (INTI…LMNY).

Its subcellular location is the membrane. This is an uncharacterized protein from Dictyostelium discoideum (Social amoeba).